The primary structure comprises 421 residues: Phosphatidylinositol 5-phosphate 4-kinase type-2 gamma (421 aa).

Ala2 bears the N-acetylalanine mark. Position 26 is a phosphoserine (Ser26). The PIPK domain maps to 43 to 420 (AADPLVGVFL…RFLDFITNIF (378 aa)). The interval 69–75 (VMLLPDD) is required for interaction with PIP5K1A. Ser349 is subject to Phosphoserine.

As to quaternary structure, interacts with PIP5K1A; the interaction inhibits PIP5K1A kinase activity. Phosphorylated, phosphorylation is induced by EGF.

The protein resides in the endoplasmic reticulum. It localises to the cytoplasm. The enzyme catalyses a 1,2-diacyl-sn-glycero-3-phospho-(1D-myo-inositol-5-phosphate) + ATP = a 1,2-diacyl-sn-glycero-3-phospho-(1D-myo-inositol-4,5-bisphosphate) + ADP + H(+). The catalysed reaction is 1,2-dihexadecanoyl-sn-glycero-3-phospho-(1D-myo-inositol-5-phosphate) + ATP = 1,2-dihexadecanoyl-sn-glycero-3-phospho-(1D-myo-inositol-4,5-bisphosphate) + ADP + H(+). It carries out the reaction 1,2-dihexadecanoyl-sn-glycero-3-phospho-(1D-myo-inositol-5-phosphate) + GTP = 1,2-dihexadecanoyl-sn-glycero-3-phospho-(1D-myo-inositol-4,5-bisphosphate) + GDP + H(+). Phosphatidylinositol 5-phosphate 4-kinase with low enzymatic activity. May be a GTP sensor, has higher GTP-dependent kinase activity than ATP-dependent kinase activity. PIP4Ks negatively regulate insulin signaling through a catalytic-independent mechanism. They interact with PIP5Ks and suppress PIP5K-mediated PtdIns(4,5)P2 synthesis and insulin-dependent conversion to PtdIns(3,4,5)P3. The protein is Phosphatidylinositol 5-phosphate 4-kinase type-2 gamma of Homo sapiens (Human).